The following is a 1003-amino-acid chain: Glutamate receptor ionotropic, NMDA 3B (1003 aa).

Residues 1 to 24 (MECVQTLWLSLALALARGSWVVRG) form the signal peptide. The Extracellular segment spans residues 25–574 (HPQPCGVPTR…PIGAFMWPLH (550 aa)). 5 N-linked (GlcNAc...) asparagine glycosylation sites follow: N69, N212, N344, N451, and N465. 2 disulfides stabilise this stretch: C439–C475 and C445–C476. The glycine site is built by S531, S533, and R538. S533 and R538 together coordinate D-serine. A helical membrane pass occupies residues 575–594 (WSMWVGVFAALHLTALFLTL). The Cytoplasmic segment spans residues 595-615 (YEWRSPYGLTPRGRNRGTVFS). The discontinuously helical intramembrane region spans 616–627 (YSSALNLCYAIL). The Cytoplasmic portion of the chain corresponds to 628–641 (FGRTVSSKTPKCPT). A helical membrane pass occupies residues 642–661 (GRFLMNLWAIFCLLVLSSYT). The Extracellular portion of the chain corresponds to 662–832 (ANLAAVMVGD…TLQMGVYHLS (171 aa)). S701 lines the glycine pocket. S701, A702, and D745 together coordinate D-serine. D745 provides a ligand contact to glycine. An N-linked (GlcNAc...) asparagine glycan is attached at N786. Residues 833-848 (GLFVLLCLGLGSALLT) form a helical membrane-spanning segment. Over 849-1003 (SLGEHVFYRL…RLLHAAPAES (155 aa)) the chain is Cytoplasmic. Residues 883-912 (LNTGPPEGQQERAEQECSGPKEEQPAADGA) are disordered. The span at 891 to 906 (QQERAEQECSGPKEEQ) shows a compositional bias: basic and acidic residues. Residues 947 to 986 (SNGPGVQAELRELELRIEAARERLRSALLRRGELRAQLGD) are a coiled coil. The interval 952–985 (VQAELRELELRIEAARERLRSALLRRGELRAQLG) is involved in the trafficking and surface expression of NMDARs.

This sequence belongs to the glutamate-gated ion channel (TC 1.A.10.1) family. NR3B/GRIN3B subfamily. Forms heterotetrameric channels that contain at least two GluN1 subunits and at least a combination of one GluN2 and one GluN3 subunits (in vitro). Forms heterotetrameric channels composed of two GluN1/zeta subunits (GRIN1), and two identical GluN3 subunits (GRIN3A or GRIN3B) (in vitro). Does not form functional homomeric channels. Expressed in the facial nucleus and the ambiguus nucleus of the brainstem, pons, medulla, spinal cord and cerebellum.

The protein localises to the cell membrane. The protein resides in the postsynaptic cell membrane. The catalysed reaction is Ca(2+)(in) = Ca(2+)(out). It carries out the reaction Na(+)(in) = Na(+)(out). Its function is as follows. Component of a non-conventional N-methyl-D-aspartate (NMDA) receptors (NMDARs) that function as heterotetrameric, ligand-gated cation channels with low calcium permeability and low voltage-dependent block by Mg(2+). Forms glutamatergic receptor complexes with GluN1 and GluN2 subunits which are activated by glycine binding to the GluN1 and GluN3 subunits and L-glutamate binding to GluN2 subunits. Forms excitatory glycinergic receptor complexes with GluN1 alone which are activated by glycine binding to the GluN1 and GluN3 subunits. GluN3B subunit also binds D-serine and, in the absence of glycine, activates glycinergic receptor complexes, but with lower efficacy than glycine. Each GluN3 subunit confers differential attributes to channel properties, including activation, deactivation and desensitization kinetics, pH sensitivity, Ca2(+) permeability, and binding to allosteric modulators. This chain is Glutamate receptor ionotropic, NMDA 3B, found in Mus musculus (Mouse).